A 428-amino-acid chain; its full sequence is Adenylosuccinate synthetase (428 aa).

GTP contacts are provided by residues 12-18 (GDEGKGK) and 40-42 (GHT). The active-site Proton acceptor is the Asp-13. 2 residues coordinate Mg(2+): Asp-13 and Gly-40. Residues 13–16 (DEGK), 38–41 (NAGH), Thr-129, Arg-143, Gln-224, Thr-239, and Arg-303 contribute to the IMP site. His-41 serves as the catalytic Proton donor. Substrate is bound at residue 299–305 (VTTGRIR). GTP-binding positions include Arg-305, 331 to 333 (KVD), and 410 to 412 (AYG).

Belongs to the adenylosuccinate synthetase family. As to quaternary structure, homodimer. Requires Mg(2+) as cofactor.

It localises to the cytoplasm. It catalyses the reaction IMP + L-aspartate + GTP = N(6)-(1,2-dicarboxyethyl)-AMP + GDP + phosphate + 2 H(+). It participates in purine metabolism; AMP biosynthesis via de novo pathway; AMP from IMP: step 1/2. Functionally, plays an important role in the de novo pathway of purine nucleotide biosynthesis. Catalyzes the first committed step in the biosynthesis of AMP from IMP. The chain is Adenylosuccinate synthetase from Francisella tularensis subsp. holarctica (strain FTNF002-00 / FTA).